The primary structure comprises 216 residues: DNA gyrase subunit B (216 aa).

The Toprim domain occupies 140–216 (SELYLVEGDS…PDKLRYHKII (77 aa)).

Belongs to the type II topoisomerase GyrB family. As to quaternary structure, heterotetramer, composed of two GyrA and two GyrB chains. In the heterotetramer, GyrA contains the active site tyrosine that forms a transient covalent intermediate with DNA, while GyrB binds cofactors and catalyzes ATP hydrolysis.

It localises to the cytoplasm. It carries out the reaction ATP-dependent breakage, passage and rejoining of double-stranded DNA.. A type II topoisomerase that negatively supercoils closed circular double-stranded (ds) DNA in an ATP-dependent manner to modulate DNA topology and maintain chromosomes in an underwound state. Negative supercoiling favors strand separation, and DNA replication, transcription, recombination and repair, all of which involve strand separation. Also able to catalyze the interconversion of other topological isomers of dsDNA rings, including catenanes and knotted rings. Type II topoisomerases break and join 2 DNA strands simultaneously in an ATP-dependent manner. In Acinetobacter venetianus (strain ATCC 31012 / DSM 23050 / BCRC 14357 / CCUG 45561 / CIP 110063 / KCTC 2702 / LMG 19082 / RAG-1), this protein is DNA gyrase subunit B (gyrB).